Reading from the N-terminus, the 247-residue chain is ATP synthase subunit a (247 aa).

Transmembrane regions (helical) follow at residues 26 to 46, 85 to 105, 115 to 135, 141 to 161, 178 to 198, and 205 to 225; these read ITNNTIILFVILIGFTFLFYV, YFPLVLFVFSFILFANLIGLL, IIFTFQIAFSLFFGITLINFF, FFNLFVPSGVPKPLIPFLVVI, FANMLAGHTLLNILSAFIFNV, and ISFLPLLFIVFIIVLEFCIAI.

It belongs to the ATPase A chain family. In terms of assembly, F-type ATPases have 2 components, CF(1) - the catalytic core - and CF(0) - the membrane proton channel. CF(1) has five subunits: alpha(3), beta(3), gamma(1), delta(1), epsilon(1). CF(0) has three main subunits: a, b and c.

The protein localises to the mitochondrion inner membrane. Functionally, mitochondrial membrane ATP synthase (F(1)F(0) ATP synthase or Complex V) produces ATP from ADP in the presence of a proton gradient across the membrane which is generated by electron transport complexes of the respiratory chain. F-type ATPases consist of two structural domains, F(1) - containing the extramembraneous catalytic core and F(0) - containing the membrane proton channel, linked together by a central stalk and a peripheral stalk. During catalysis, ATP synthesis in the catalytic domain of F(1) is coupled via a rotary mechanism of the central stalk subunits to proton translocation. Key component of the proton channel; it may play a direct role in the translocation of protons across the membrane. In Acanthamoeba castellanii (Amoeba), this protein is ATP synthase subunit a (ATP6).